Here is a 726-residue protein sequence, read N- to C-terminus: Pre-mRNA-splicing factor CLF1 (726 aa).

HAT repeat units follow at residues 55 to 87 (EFQA…WEAS), 89 to 121 (NEYE…MELK), 123 to 155 (RNIN…LEEL), 157 to 188 (LNVS…LEER), 190 to 221 (NELD…FEED), 223 to 262 (GQPD…METR), 264 to 298 (KEFE…FEKQ), 308 to 340 (TVLG…LEED), 352 to 386 (VEPM…LWLQ), 396 to 432 (KDYD…FEIR), 434 to 465 (LDVS…LEMR), 467 to 499 (REFD…VESA), 501 to 534 (EDFE…FEAG), 536 to 567 (GERE…MEIA), 585 to 626 (GDAD…EHGD), and 635 to 667 (DMLP…DDER). The disordered stretch occupies residues 682–726 (AWAQQRAGQGEEGGLSYDLPSDSEDENEDGDEDGDGREEEGMDQD). Residues 702–726 (SDSEDENEDGDEDGDGREEEGMDQD) show a composition bias toward acidic residues.

This sequence belongs to the crooked-neck family. Associated with the spliceosome.

Its subcellular location is the nucleus. Involved in pre-mRNA splicing and cell cycle progression. Required for the spliceosome assembly and initiation of the DNA replication. This chain is Pre-mRNA-splicing factor CLF1 (CLF1), found in Cryptococcus neoformans var. neoformans serotype D (strain B-3501A) (Filobasidiella neoformans).